The chain runs to 457 residues: Transmembrane protein 143 (457 aa).

A run of 2 helical transmembrane segments spans residues 264 to 284 (ILNVTLIVSGVVFFVNVGMVV) and 285 to 305 (LSDLKMATSLLLLLFAAFMGL). S316 carries the post-translational modification Phosphoserine. The span at 429 to 439 (LSSPKSAPSDD) shows a compositional bias: polar residues. The segment at 429-457 (LSSPKSAPSDDNSLEKPLGPAQPSHLVGN) is disordered.

The protein resides in the membrane. This Bos taurus (Bovine) protein is Transmembrane protein 143 (TMEM143).